We begin with the raw amino-acid sequence, 732 residues long: Catalase-peroxidase (732 aa).

Residues Met1–Leu23 form a disordered region. A cross-link (tryptophyl-tyrosyl-methioninium (Trp-Tyr) (with M-246)) is located at residues Trp97–Tyr220. Catalysis depends on His98, which acts as the Proton acceptor. Positions Tyr220–Met246 form a cross-link, tryptophyl-tyrosyl-methioninium (Tyr-Met) (with W-97). Heme b is bound at residue His261.

It belongs to the peroxidase family. Peroxidase/catalase subfamily. Homodimer or homotetramer. Requires heme b as cofactor. In terms of processing, formation of the three residue Trp-Tyr-Met cross-link is important for the catalase, but not the peroxidase activity of the enzyme.

It carries out the reaction H2O2 + AH2 = A + 2 H2O. The enzyme catalyses 2 H2O2 = O2 + 2 H2O. Bifunctional enzyme with both catalase and broad-spectrum peroxidase activity. In Prosthecochloris aestuarii (strain DSM 271 / SK 413), this protein is Catalase-peroxidase.